Consider the following 286-residue polypeptide: Ribosomal RNA small subunit methyltransferase H (286 aa).

S-adenosyl-L-methionine is bound by residues G30–H32, D49, F88, D97, and Q104. The tract at residues H260–R286 is disordered.

This sequence belongs to the methyltransferase superfamily. RsmH family.

The protein localises to the cytoplasm. The enzyme catalyses cytidine(1402) in 16S rRNA + S-adenosyl-L-methionine = N(4)-methylcytidine(1402) in 16S rRNA + S-adenosyl-L-homocysteine + H(+). Specifically methylates the N4 position of cytidine in position 1402 (C1402) of 16S rRNA. In Solibacter usitatus (strain Ellin6076), this protein is Ribosomal RNA small subunit methyltransferase H.